Consider the following 1017-residue polypeptide: Pro-apoptotic serine protease NMA111 (1017 aa).

A disordered region spans residues 1-46 (MDQNGASTEARSKRKQPPTSPSTDRPLKQIKPEVDAHTRNGVPKSP). Positions 25–38 (RPLKQIKPEVDAHT) are enriched in basic and acidic residues. The interval 88–278 (VVSIHFCQTC…LPLDRPLRAL (191 aa)) is serine protease. Catalysis depends on charge relay system residues H126, D157, and S239. PDZ domains follow at residues 305 to 383 (RRLG…QRAG) and 879 to 960 (SFCG…MTFD).

It belongs to the peptidase S1C family.

It localises to the nucleus. In terms of biological role, nuclear serine protease which mediates apoptosis. The protein is Pro-apoptotic serine protease NMA111 (NMA111) of Phaeosphaeria nodorum (strain SN15 / ATCC MYA-4574 / FGSC 10173) (Glume blotch fungus).